Consider the following 313-residue polypeptide: Formate-nitrite transporter (313 aa).

The Cytoplasmic portion of the chain corresponds to 1-47 (MPKSNTKYVIDPLSVKTSCSSEESYIRCVEYGKSKAHYSSLILLAKA). Residues 48-68 (ILAGVFVGVCAHASGIAGGLF) traverse the membrane as a helical segment. Topologically, residues 69–77 (YYHKLREYV) are extracellular. A helical transmembrane segment spans residues 78–98 (GASMSAFVYGFTFPIAFLCII). Residues 99–128 (CTGSDLFTGNTLAVTTALLHGKVSCLEYVR) lie on the Cytoplasmic side of the membrane. A helical transmembrane segment spans residues 129–149 (VMCISLFGNYVGAVSFAFFVS). At 150 to 185 (YGSGAFHKKEQVDKNHIFQFLNDIAVKKVNHTFVEC) the chain is on the extracellular side. Asparagine 179 is a glycosylation site (N-linked (GlcNAc...) asparagine). A helical transmembrane segment spans residues 186 to 206 (ICLAIGCNIFVCLAVYFVLSI). Residues 207–211 (KDGSG) are Cytoplasmic-facing. Residues 212-232 (MVFSVFFAVYAFAIAGYEHII) traverse the membrane as a helical segment. At 233-260 (ANIYTLNISLMIDTEVSFTQVYFKNLLP) the chain is on the extracellular side. Asparagine 239 carries an N-linked (GlcNAc...) asparagine glycan. The chain crosses the membrane as a helical span at residues 261–281 (TLIGNYIAGALVLACPLFFIY). The Cytoplasmic segment spans residues 282–313 (RSYYINYEKMNEPSGGSLRSISIEMKNDGGAT).

It belongs to the FNT transporter (TC 1.A.16) family. As to quaternary structure, homopentamer.

Its subcellular location is the cell membrane. It localises to the vacuole membrane. The catalysed reaction is (S)-lactate(in) + H(+)(in) = (S)-lactate(out) + H(+)(out). The enzyme catalyses formate(in) + H(+)(in) = formate(out) + H(+)(out). It catalyses the reaction pyruvate(out) + H(+)(out) = pyruvate(in) + H(+)(in). It carries out the reaction acetate(out) + H(+)(out) = acetate(in) + H(+)(in). Its activity is regulated as follows. Inhibited by the Malaria Box compound MMV007839 and its derivatives BH296 and BH267.meta. In terms of biological role, monocarboxylate-proton symporter that mediates the efflux of the waste product lactate in the intraerythrocytic parasites; active in acidic-to-neutral pH range. Transports L-lactate. The sequence is that of Formate-nitrite transporter from Plasmodium ovale.